The sequence spans 447 residues: Flagellum-specific ATP synthase (447 aa).

Position 167–174 (167–174 (SGSGVGKS)) interacts with ATP.

The protein belongs to the ATPase alpha/beta chains family.

It localises to the cytoplasm. The enzyme catalyses ATP + H2O + 4 H(+)(in) = ADP + phosphate + 5 H(+)(out). Functionally, probable catalytic subunit of a protein translocase for flagellum-specific export, or a proton translocase involved in local circuits at the flagellum. The protein is Flagellum-specific ATP synthase (fliI) of Treponema pallidum (strain Nichols).